Reading from the N-terminus, the 683-residue chain is Translation factor guf1, mitochondrial (683 aa).

A mitochondrion-targeting transit peptide spans 1–43 (MRGCLQLARWLSAAPKGTAASLTRAPFVLANAPRYFTSSASRA). The region spanning 66–250 (ERYRNFCIVA…KIPAYGHFPV (185 aa)) is the tr-type G domain. GTP contacts are provided by residues 75–82 (AHVDHGKS), 139–143 (DTPGH), and 193–196 (NKVD).

This sequence belongs to the TRAFAC class translation factor GTPase superfamily. Classic translation factor GTPase family. LepA subfamily.

It is found in the mitochondrion inner membrane. The enzyme catalyses GTP + H2O = GDP + phosphate + H(+). Functionally, promotes mitochondrial protein synthesis. May act as a fidelity factor of the translation reaction, by catalyzing a one-codon backward translocation of tRNAs on improperly translocated ribosomes. Binds to mitochondrial ribosomes in a GTP-dependent manner. The chain is Translation factor guf1, mitochondrial (guf1) from Aspergillus fumigatus (strain ATCC MYA-4609 / CBS 101355 / FGSC A1100 / Af293) (Neosartorya fumigata).